Consider the following 167-residue polypeptide: Plastocyanin major isoform, chloroplastic (167 aa).

Residues 1–52 constitute a chloroplast transit peptide; the sequence is MASVTSATVAIPSFTGLKASTIKSSATVRIQTAAVASPKLTVKSSLKNFGVA. A thylakoid-targeting transit peptide spans 53–68; that stretch reads AVAAAASIALAGNAMA. The 99-residue stretch at 69–167 folds into the Plastocyanin-like domain; it reads IEVLLGGGDG…AGMVGKVTVN (99 aa). Positions 105, 152, 155, and 160 each coordinate Cu cation.

The protein belongs to the plastocyanin family. It depends on Cu(2+) as a cofactor.

The protein localises to the plastid. It localises to the chloroplast thylakoid membrane. Functionally, participates in electron transfer between P700 and the cytochrome b6-f complex in photosystem I. Seems to be the major plastocyanin in Arabidopsis. The polypeptide is Plastocyanin major isoform, chloroplastic (DRT112) (Arabidopsis thaliana (Mouse-ear cress)).